Consider the following 181-residue polypeptide: Large ribosomal subunit protein uL10 (181 aa).

The protein belongs to the universal ribosomal protein uL10 family. As to quaternary structure, part of the ribosomal stalk of the 50S ribosomal subunit. The N-terminus interacts with L11 and the large rRNA to form the base of the stalk. The C-terminus forms an elongated spine to which L12 dimers bind in a sequential fashion forming a multimeric L10(L12)X complex.

Functionally, forms part of the ribosomal stalk, playing a central role in the interaction of the ribosome with GTP-bound translation factors. The protein is Large ribosomal subunit protein uL10 of Nostoc sp. (strain PCC 7120 / SAG 25.82 / UTEX 2576).